The following is a 286-amino-acid chain: Pyridoxal kinase PdxY (286 aa).

Substrate is bound by residues Ser9 and 44–45 (TQ). Residues Asp111, Ala143, Glu148, Lys181, and 208 to 211 (RPLV) each bind ATP. Asp223 serves as a coordination point for substrate.

It belongs to the pyridoxine kinase family. PdxY subfamily. Homodimer. It depends on Mg(2+) as a cofactor.

The enzyme catalyses pyridoxal + ATP = pyridoxal 5'-phosphate + ADP + H(+). It participates in cofactor metabolism; pyridoxal 5'-phosphate salvage; pyridoxal 5'-phosphate from pyridoxal: step 1/1. In terms of biological role, pyridoxal kinase involved in the salvage pathway of pyridoxal 5'-phosphate (PLP). Catalyzes the phosphorylation of pyridoxal to PLP. This is Pyridoxal kinase PdxY from Yersinia pseudotuberculosis serotype I (strain IP32953).